Reading from the N-terminus, the 327-residue chain is Inactive peptidyl-prolyl cis-trans isomerase FKBP6 (327 aa).

In terms of domain architecture, PPIase FKBP-type spans 54-143 (DASVLVKYSG…LFEIELIDFL (90 aa)). 3 TPR repeats span residues 171–204 (AATE…LHRR), 219–252 (LLVL…DKRN), and 253–286 (AKAL…QPCN).

Belongs to the FKBP6 family. In terms of assembly, interacts with HSP72/HSPA2 and CLTC. Interacts with GAPDH; leading to inhibit GAPDH catalytic activity. Interacts (via TPR repeats) with HSP90. Testis-specific.

Its subcellular location is the cytoplasm. The protein resides in the cytosol. It localises to the nucleus. It is found in the chromosome. Its function is as follows. Co-chaperone required during spermatogenesis to repress transposable elements and prevent their mobilization, which is essential for the germline integrity. Acts via the piRNA metabolic process, which mediates the repression of transposable elements during meiosis by forming complexes composed of piRNAs and Piwi proteins and govern the methylation and subsequent repression of transposons. Acts as a co-chaperone via its interaction with HSP90 and is required for the piRNA amplification process, the secondary piRNA biogenesis. May be required together with HSP90 in removal of 16 nucleotide ping-pong by-products from Piwi complexes, possibly facilitating turnover of Piwi complexes. The sequence is that of Inactive peptidyl-prolyl cis-trans isomerase FKBP6 (Fkbp6) from Mus musculus (Mouse).